Here is a 528-residue protein sequence, read N- to C-terminus: Inositol-3-phosphate synthase (528 aa).

NAD(+) is bound by residues glycine 66, glycine 67, asparagine 68, asparagine 69, aspartate 140, glutamine 187, arginine 190, threonine 228, alanine 229, asparagine 230, threonine 231, glycine 279, aspartate 304, serine 307, asparagine 338, asparagine 339, aspartate 340, lysine 353, glycine 392, aspartate 393, aspartate 421, and serine 422.

It belongs to the myo-inositol 1-phosphate synthase family. It depends on NAD(+) as a cofactor.

It is found in the cytoplasm. Its subcellular location is the cytosol. It carries out the reaction D-glucose 6-phosphate = 1D-myo-inositol 3-phosphate. Its pathway is polyol metabolism; myo-inositol biosynthesis; myo-inositol from D-glucose 6-phosphate: step 1/2. Activated by ammonium ions. In terms of biological role, key enzyme in myo-inositol biosynthesis pathway that catalyzes the conversion of glucose 6-phosphate to 1-myo-inositol 1-phosphate in a NAD-dependent manner. Rate-limiting enzyme in the synthesis of all inositol-containing compounds. De novo-synthesized myo-inositol is essential for incorporation into GPI (glycosylphosphatidylinositol) glycolipids in the bloodstream form. The protein is Inositol-3-phosphate synthase of Trypanosoma brucei brucei.